Reading from the N-terminus, the 134-residue chain is Large ribosomal subunit protein uL16c (134 aa).

Positions 1–22 (MLSPKRTRFRKQHRGRMKGISH) are disordered.

The protein belongs to the universal ribosomal protein uL16 family. In terms of assembly, part of the 50S ribosomal subunit.

It localises to the plastid. The protein resides in the chloroplast. This Nicotiana tomentosiformis (Tobacco) protein is Large ribosomal subunit protein uL16c.